A 132-amino-acid chain; its full sequence is MRDYKQLNGLALAYVGDAIYEIYIRDYLVSLGQTKPNVLHRMATHYVSAKAQASLMQAMLAGEMLTEEEEVMYKRGRNAKSHTFAKNADVTTYRVATGFESLMGYLHLTQQKERLEELINWCIKKVGETNEK.

The active site involves aspartate 17.

This sequence belongs to the MrnC RNase family. As to quaternary structure, homodimer. Mg(2+) is required as a cofactor.

The protein resides in the cytoplasm. In terms of biological role, involved in correct processing of both the 5' and 3' ends of 23S rRNA precursor. Processes 30S rRNA precursor transcript even in absence of ribonuclease 3 (Rnc); Rnc processes 30S rRNA into smaller rRNA precursors. This is Mini-ribonuclease 3 from Enterococcus faecalis (strain ATCC 700802 / V583).